Consider the following 411-residue polypeptide: Probable UDP-arabinose 4-epimerase 3 (411 aa).

The span at 1 to 13 shows a compositional bias: polar residues; that stretch reads MLSFSRARSQGRN. The segment at 1–22 is disordered; it reads MLSFSRARSQGRNTRPLGGGME. Topologically, residues 1 to 31 are cytoplasmic; the sequence is MLSFSRARSQGRNTRPLGGGMEYLEPKRKSN. Residues 32-50 traverse the membrane as a helical; Signal-anchor for type II membrane protein segment; that stretch reads VMGKIILVVSLTALCIFML. At 51–411 the chain is on the lumenal side; the sequence is KHAPSFTSPT…KTHPHGYASS (361 aa). NAD(+) is bound at residue 71-102; it reads HVLVTGGAGYIGSHAALRLLKDSYRVTIVDNL. Residue Y219 is the Proton acceptor of the active site.

Belongs to the NAD(P)-dependent epimerase/dehydratase family. It depends on NAD(+) as a cofactor.

It localises to the golgi apparatus. The protein resides in the golgi stack membrane. It carries out the reaction UDP-beta-L-arabinopyranose = UDP-alpha-D-xylose. Its pathway is nucleotide-sugar biosynthesis; UDP-L-arabinose biosynthesis; UDP-L-arabinose from UDP-alpha-D-xylose: step 1/1. The protein operates within cell wall biogenesis; cell wall polysaccharide biosynthesis. This chain is Probable UDP-arabinose 4-epimerase 3, found in Arabidopsis thaliana (Mouse-ear cress).